The following is a 77-amino-acid chain: Distinctin-like peptide (77 aa).

The N-terminal stretch at 1-19 (LKKSLFLVTFLALVPLFLC) is a signal peptide. Residues 20-39 (EEEKREEENEERQDDDQSEE) constitute a propeptide that is removed on maturation.

The protein belongs to the frog skin active peptide (FSAP) family. Expressed by the skin glands.

It localises to the secreted. Its function is as follows. Has antimicrobial activity. The protein is Distinctin-like peptide of Pithecopus azureus (Orange-legged monkey tree frog).